The primary structure comprises 182 residues: ATP-dependent protease subunit HslV (182 aa).

Thr-12 is an active-site residue. 3 residues coordinate Na(+): Ala-167, Cys-170, and Thr-173.

This sequence belongs to the peptidase T1B family. HslV subfamily. In terms of assembly, a double ring-shaped homohexamer of HslV is capped on each side by a ring-shaped HslU homohexamer. The assembly of the HslU/HslV complex is dependent on binding of ATP.

Its subcellular location is the cytoplasm. The catalysed reaction is ATP-dependent cleavage of peptide bonds with broad specificity.. With respect to regulation, allosterically activated by HslU binding. In terms of biological role, protease subunit of a proteasome-like degradation complex believed to be a general protein degrading machinery. This chain is ATP-dependent protease subunit HslV, found in Pelodictyon phaeoclathratiforme (strain DSM 5477 / BU-1).